The primary structure comprises 105 residues: UPF0145 protein LPC_0273 (105 aa).

This sequence belongs to the UPF0145 family.

This chain is UPF0145 protein LPC_0273, found in Legionella pneumophila (strain Corby).